A 1146-amino-acid polypeptide reads, in one-letter code: Sodium/hydrogen exchanger 7 (1146 aa).

The Extracellular segment spans residues 1-28; that stretch reads MTTVIDATMAYRFLEEATDSSSSSSSSK. Residues 29 to 49 form a helical membrane-spanning segment; that stretch reads LESSPVDAVLFVGMSLVLGIA. Residues 50-58 lie on the Cytoplasmic side of the membrane; the sequence is SRHLLRGTR. A helical membrane pass occupies residues 59–79; it reads VPYTVALLVIGIALGSLEYGA. The Extracellular portion of the chain corresponds to 80–99; sequence KHNLGKIGHGIRIWNEIDPE. The chain crosses the membrane as a helical span at residues 100-120; that stretch reads LLLAVFLPALLFESSFSMEVH. Topologically, residues 121–127 are cytoplasmic; it reads QIKRCLG. The chain crosses the membrane as a helical span at residues 128-148; the sequence is QMVLLAVPGVLISTACLGSLV. Topologically, residues 149–159 are extracellular; that stretch reads KVTFPYEWDWK. The helical transmembrane segment at 160–180 threads the bilayer; sequence TSLLLGGLLSATDPVAVVALL. At 181-191 the chain is on the cytoplasmic side; the sequence is KELGASKKLST. The helical transmembrane segment at 192–212 threads the bilayer; the sequence is IIEGESLMNDGTAIVVFQLFL. Residues 213–227 are Extracellular-facing; that stretch reads KMAMGQNSDWSSIIK. Residues 228 to 250 traverse the membrane as a helical segment; the sequence is FLLKVALGAVGIGLAFGIASVIW. The Cytoplasmic segment spans residues 251 to 253; that stretch reads LKF. A helical membrane pass occupies residues 254–273; that stretch reads IFNDTVIEITLTIAVSYFAY. Over 274 to 278 the chain is Extracellular; the sequence is YTAQE. The helical transmembrane segment at 279–299 threads the bilayer; sequence WAGASGVLTVMTLGMFYAAFA. Residues 300–313 lie on the Cytoplasmic side of the membrane; that stretch reads RTAFKGDSQKSLHH. The helical transmembrane segment at 314–334 threads the bilayer; the sequence is FWEMVAYIANTLIFILSGVVI. Residues 335 to 352 are Extracellular-facing; the sequence is AEGILDSDKIAYQGNSWR. Residues 353-373 traverse the membrane as a helical segment; the sequence is FLFLLYVYIQLSRVVVVGVLY. Over 374–387 the chain is Cytoplasmic; that stretch reads PLLCRFGYGLDWKE. The chain crosses the membrane as a helical span at residues 388-408; that stretch reads SIILVWSGLRGAVALALSLSV. The Extracellular segment spans residues 409-420; the sequence is KQSSGNSHISKE. A helical membrane pass occupies residues 421 to 441; sequence TGTLFLFFTGGIVFLTLIVNG. Residues 442–1146 lie on the Cytoplasmic side of the membrane; sequence STTQFVLRLL…PSKIVFRNDL (705 aa). Disordered regions lie at residues 981–1001 and 1102–1128; these read LHRR…QLQR and CQLP…DEDE. The span at 986–996 shows a compositional bias: low complexity; that stretch reads SSLTPPRSSSS. The span at 1109–1118 shows a compositional bias: polar residues; that stretch reads ESSTRQNTMV.

The protein belongs to the monovalent cation:proton antiporter 1 (CPA1) transporter (TC 2.A.36) family. Interacts with CIPK24/SOS2 and CBL4/SOS3. In terms of processing, phosphorylated by CIPK24/SOS2 in complex with CBL4/SOS3. More expressed in roots than in shoots. Mostly localized in parenchyma cells at the xylem/symplast boundary in roots, hypocotyls, stems and leaves. Also present in root tips epidermal cells.

The protein resides in the cell membrane. The catalysed reaction is Na(+)(in) + H(+)(out) = Na(+)(out) + H(+)(in). It catalyses the reaction K(+)(in) + H(+)(out) = K(+)(out) + H(+)(in). Its function is as follows. Acts in electroneutral exchange of protons for cations such as Na(+) or Li(+) across plasma membrane. Involved in Na(+) and K(+) homeostasis. Required for cytoplasmic Na(+) and Li(+) detoxification by secreting them from the cytoplasm to the extracellular space. Regulates Na(+) content of the xylem sap. This Arabidopsis thaliana (Mouse-ear cress) protein is Sodium/hydrogen exchanger 7 (NHX7).